A 216-amino-acid chain; its full sequence is GTP cyclohydrolase 1 (216 aa).

Positions 109, 112, and 180 each coordinate Zn(2+).

This sequence belongs to the GTP cyclohydrolase I family. Homomer.

It catalyses the reaction GTP + H2O = 7,8-dihydroneopterin 3'-triphosphate + formate + H(+). It functions in the pathway cofactor biosynthesis; 7,8-dihydroneopterin triphosphate biosynthesis; 7,8-dihydroneopterin triphosphate from GTP: step 1/1. This Tolumonas auensis (strain DSM 9187 / NBRC 110442 / TA 4) protein is GTP cyclohydrolase 1.